A 182-amino-acid polypeptide reads, in one-letter code: Probable inosine/xanthosine triphosphatase (182 aa).

Glu-65 is a binding site for Mg(2+). 65–66 (EA) is a binding site for substrate.

The protein belongs to the YjjX NTPase family. As to quaternary structure, homodimer. The cofactor is Mg(2+). Requires Mn(2+) as cofactor.

It catalyses the reaction XTP + H2O = XDP + phosphate + H(+). It carries out the reaction ITP + H2O = IDP + phosphate + H(+). Its function is as follows. Phosphatase that hydrolyzes non-canonical purine nucleotides such as XTP and ITP to their respective diphosphate derivatives. Probably excludes non-canonical purines from DNA/RNA precursor pool, thus preventing their incorporation into DNA/RNA and avoiding chromosomal lesions. This Pyrobaculum neutrophilum (strain DSM 2338 / JCM 9278 / NBRC 100436 / V24Sta) (Thermoproteus neutrophilus) protein is Probable inosine/xanthosine triphosphatase.